A 1223-amino-acid polypeptide reads, in one-letter code: DNA-directed RNA polymerase II subunit RPB2 (1223 aa).

The interval 1 to 20 (MSADNEDYYDEDPYGFEEEN) is disordered. Asp-836 contributes to the Mg(2+) binding site. 4 residues coordinate Zn(2+): Cys-1162, Cys-1165, Cys-1181, and Cys-1184. Residues 1162 to 1184 (CGICGLMSVIAKLNHNQFECKGC) form a C4-type zinc finger.

It belongs to the RNA polymerase beta chain family. As to quaternary structure, component of the RNA polymerase II (Pol II) complex consisting of 12 subunits.

The protein resides in the nucleus. The enzyme catalyses RNA(n) + a ribonucleoside 5'-triphosphate = RNA(n+1) + diphosphate. DNA-dependent RNA polymerase catalyzes the transcription of DNA into RNA using the four ribonucleoside triphosphates as substrates. Second largest component of RNA polymerase II which synthesizes mRNA precursors and many functional non-coding RNAs. Proposed to contribute to the polymerase catalytic activity and forms the polymerase active center together with the largest subunit. Pol II is the central component of the basal RNA polymerase II transcription machinery. It is composed of mobile elements that move relative to each other. RPB2 is part of the core element with the central large cleft, the clamp element that moves to open and close the cleft and the jaws that are thought to grab the incoming DNA template. This chain is DNA-directed RNA polymerase II subunit RPB2 (RPB2), found in Candida glabrata (strain ATCC 2001 / BCRC 20586 / JCM 3761 / NBRC 0622 / NRRL Y-65 / CBS 138) (Yeast).